Consider the following 95-residue polypeptide: Protein TusB (95 aa).

Belongs to the DsrH/TusB family. As to quaternary structure, heterohexamer, formed by a dimer of trimers. The hexameric TusBCD complex contains 2 copies each of TusB, TusC and TusD. The TusBCD complex interacts with TusE.

It is found in the cytoplasm. Part of a sulfur-relay system required for 2-thiolation of 5-methylaminomethyl-2-thiouridine (mnm(5)s(2)U) at tRNA wobble positions. The sequence is that of Protein TusB from Escherichia coli O45:K1 (strain S88 / ExPEC).